The primary structure comprises 468 residues: UDP-glucosyl transferase 74CD1 (468 aa).

Gly20 provides a ligand contact to UDP-alpha-D-glucose. His21 (proton acceptor) is an active-site residue. The active-site Charge relay is the Asp114. Residues Ser292, Trp344, Gln347, His362, Trp365, Asn366, Ser367, Glu370, Asp386, and Gln387 each coordinate UDP-alpha-D-glucose.

It belongs to the UDP-glycosyltransferase family. In terms of tissue distribution, mainly expressed in flowers, flower buds and young leaves, and, to a lesser extent, in old leaves, stems and roots.

The protein operates within secondary metabolite biosynthesis; terpenoid biosynthesis. Component of the oleanane-type triterpene saponins (e.g. saponarioside A and saponarioside B) biosynthetic pathway, leading to the production of natural products with detergent properties used as traditional sources of soap. A glycosyltransferase that, together with SDR1, mediates the conversion of QA-tri to QA-triF; UGT74CD1 may transfer 4-keto-6-deoxy-glucose to QA-tri, which is in turn reduced to D-fucose by SDR1, thus leading to QA-triF formation via the initiation of the C-28 sugar chain. The sequence is that of UDP-glucosyl transferase 74CD1 from Saponaria officinalis (Common soapwort).